The following is a 249-amino-acid chain: Metal-staphylopine import system ATP-binding protein CntF (249 aa).

One can recognise an ABC transporter domain in the interval 2–244 (IKIKDVEKSY…DNAYTRELIE (243 aa)). ATP is bound at residue 42-49 (GESGSGKS).

Belongs to the ABC transporter superfamily. As to quaternary structure, the complex is composed of two ATP-binding proteins (CntD and CntF), two transmembrane proteins (CntB and CntC) and a solute-binding protein (CntA).

The protein localises to the cell membrane. With respect to regulation, nickel/cobalt import is reduced in the presence of zinc. Functionally, part of the ABC transporter complex CntABCDF (Opp1) involved in the uptake of metal in complex with the metallophore staphylopine (StP). Involved in the import of divalent metals ions such as nickel, cobalt and zinc. Probably responsible for energy coupling to the transport system. Plays a major role in nickel/cobalt import in zinc-depleted conditions. Contributes to virulence. Required for full urease activity in vitro. The sequence is that of Metal-staphylopine import system ATP-binding protein CntF from Staphylococcus aureus (strain NCTC 8325 / PS 47).